The chain runs to 636 residues: 1,4-alpha-glucan branching enzyme GlgB (636 aa).

Asp-309 functions as the Nucleophile in the catalytic mechanism. The active-site Proton donor is the Glu-362.

Belongs to the glycosyl hydrolase 13 family. GlgB subfamily. Monomer.

The enzyme catalyses Transfers a segment of a (1-&gt;4)-alpha-D-glucan chain to a primary hydroxy group in a similar glucan chain.. The protein operates within glycan biosynthesis; glycogen biosynthesis. Its function is as follows. Catalyzes the formation of the alpha-1,6-glucosidic linkages in glycogen by scission of a 1,4-alpha-linked oligosaccharide from growing alpha-1,4-glucan chains and the subsequent attachment of the oligosaccharide to the alpha-1,6 position. The polypeptide is 1,4-alpha-glucan branching enzyme GlgB (Aromatoleum aromaticum (strain DSM 19018 / LMG 30748 / EbN1) (Azoarcus sp. (strain EbN1))).